A 285-amino-acid chain; its full sequence is Tropomyosin alpha-3 chain (285 aa).

The stretch at 1 to 285 forms a coiled coil; the sequence is MMEAIKKKMQ…DHALNDMTSI (285 aa). The residue at position 2 (Met-2) is an N-acetylmethionine. An N-acetylalanine modification is found at Met-2. Residues 16–41 are compositionally biased toward basic and acidic residues; it reads KENALDRAEQAEAEQKQAEERSKQLE. Residues 16–44 are disordered; the sequence is KENALDRAEQAEAEQKQAEERSKQLEDEL. Phosphothreonine is present on Thr-54. A phosphoserine mark is found at Ser-62 and Ser-88. Thr-109 bears the Phosphothreonine mark. N6-acetyllysine is present on residues Glu-125 and Leu-177. Ser-207 is modified (phosphoserine). Tyr-215 bears the N6-acetyllysine mark. Ser-216 is subject to Phosphoserine. Phosphothreonine is present on Thr-253. Tyr-262 carries the phosphotyrosine modification. Ser-272 is modified (phosphoserine). Thr-283 bears the Phosphothreonine mark. Ser-284 carries the phosphoserine modification.

Belongs to the tropomyosin family. In terms of assembly, homodimer. Heterodimer of an alpha (TPM1, TPM3 or TPM4) and a beta (TPM2) chain. Interacts with TMOD1. Interacts with TNNT1.

It localises to the cytoplasm. It is found in the cytoskeleton. In terms of biological role, binds to actin filaments in muscle and non-muscle cells. Plays a central role, in association with the troponin complex, in the calcium dependent regulation of vertebrate striated muscle contraction. Smooth muscle contraction is regulated by interaction with caldesmon. In non-muscle cells is implicated in stabilizing cytoskeleton actin filaments. This chain is Tropomyosin alpha-3 chain (TPM3), found in Homo sapiens (Human).